The sequence spans 328 residues: P2Y purinoceptor 6 (328 aa).

The Extracellular portion of the chain corresponds to 1 to 27 (MERDNGTIQAPGLPPTTCVYREDFKRL). N-linked (GlcNAc...) asparagine glycosylation occurs at N5. A helical membrane pass occupies residues 28–48 (LLPPVYSVVLVVGLPLNVCVI). The Cytoplasmic portion of the chain corresponds to 49 to 62 (AQICASRRTLTRSA). Residues 63-83 (VYTLNLALADLLYACSLPLLI) traverse the membrane as a helical segment. The Extracellular segment spans residues 84–101 (YNYARGDHWPFGDLACRL). C99 and C177 are oxidised to a cystine. Residues 102-122 (VRFLFYANLHGSILFLTCISF) traverse the membrane as a helical segment. At 123-144 (QRYLGICHPLAPWHKRGGRRAA) the chain is on the cytoplasmic side. A helical transmembrane segment spans residues 145–165 (WVVCGVVWLVVTAQCLPTAVF). The Extracellular portion of the chain corresponds to 166 to 194 (AATGIQRNRTVCYDLSPPILSTRYLPYGM). The N-linked (GlcNAc...) asparagine glycan is linked to N173. A helical membrane pass occupies residues 195–215 (ALTVIGFLLPFTALLACYCRM). The Cytoplasmic portion of the chain corresponds to 216–236 (ARRLCRQDGPAGPVAQERRSK). A helical membrane pass occupies residues 237–257 (AARMAVVVAAVFVISFLPFHI). At 258–280 (TKTAYLAVRSTPGVSCPVLETFA) the chain is on the extracellular side. A helical transmembrane segment spans residues 281-303 (AAYKGTRPFASANSVLDPILFYF). Residues 304–328 (TQQKFRRQPHDLLQKLTAKWQRQRV) are Cytoplasmic-facing.

Belongs to the G-protein coupled receptor 1 family. In terms of tissue distribution, abundantly expressed in various tissues including lung, stomach, intestine, spleen, mesentery, heart, and, most prominently, aorta.

It localises to the cell membrane. In terms of biological role, receptor for extracellular UTP &gt; ADP = 2-methylthio-ATP &gt; ADP-beta-S &gt; ATP = ATP-gamma-S. The activity of this receptor is mediated by G proteins which activate a phosphatidylinositol-calcium second messenger system. Functionally coupled to phospholipase C. This Rattus norvegicus (Rat) protein is P2Y purinoceptor 6 (P2ry6).